The chain runs to 1693 residues: 1-phosphatidylinositol 4,5-bisphosphate phosphodiesterase eta-1 (1693 aa).

Residues 20–128 enclose the PH domain; the sequence is SVMQSGTQMI…WITGLKYLMA (109 aa). 3 consecutive EF-hand domains span residues 142-177, 178-214, and 226-246; these read THDQ…LNVN, LPRR…MSLR, and DKKD…EQKM. Asp-155, Asn-157, Asp-159, and Glu-166 together coordinate Ca(2+). A PI-PLC X-box domain is found at 299 to 444; it reads QDMDQPLCNY…LKGKILVKGK (146 aa). His-314 is an active-site residue. Residues Asn-315, Glu-344, and Asp-346 each contribute to the Ca(2+) site. The active site involves His-358. Residue Glu-393 participates in Ca(2+) binding. Substrate contacts are provided by Lys-442 and Lys-444. Residues 526–585 form a disordered region; it reads LNAHLKQSPDVKESGKKSHGRSLMTNFGKHKKTTKSRSKSYSTDDEEDTQQSTGKEGGQL. Residues 532 to 541 show a composition bias toward basic and acidic residues; the sequence is QSPDVKESGK. Basic residues predominate over residues 553-563; the sequence is GKHKKTTKSRS. The 114-residue stretch at 601 to 714 folds into the PI-PLC Y-box domain; it reads LSDLVVYTNS…GYVLKPQQMC (114 aa). Substrate contacts are provided by Ser-627 and Arg-654. The C2 domain maps to 715–843; the sequence is KGTFNPFSGD…PGYRHVYLEG (129 aa). Ca(2+) contacts are provided by Ile-758, Asp-760, Asp-784, Asp-813, His-814, and Asp-815. The segment covering 992–1005 has biased composition (basic and acidic residues); the sequence is IEGKENSLAEDKDG. Disordered regions lie at residues 992-1014, 1052-1089, 1300-1329, and 1578-1613; these read IEGK…ASIK, TGEQ…PKQH, LESN…ETLK, and LSSR…GAGV. Positions 1065–1086 are enriched in polar residues; that stretch reads RTTSNATSNCQENPCPSKSLSP. Residues 1592 to 1601 are compositionally biased toward basic and acidic residues; it reads RAKEKQEANK.

Ca(2+) is required as a cofactor. As to expression, expressed in brain and to a lower extent in lung. In brain, it is found in cerebrum, cerebellum and spinal cord. In embryo expressed in the notochord, developing spinal cord (in a ventral to dorsal gradient), dorsal root ganglia, cerebellum and dermatomyosome.

It localises to the cytoplasm. The protein localises to the membrane. It catalyses the reaction a 1,2-diacyl-sn-glycero-3-phospho-(1D-myo-inositol-4,5-bisphosphate) + H2O = 1D-myo-inositol 1,4,5-trisphosphate + a 1,2-diacyl-sn-glycerol + H(+). Its function is as follows. The production of the second messenger molecules diacylglycerol (DAG) and inositol 1,4,5-trisphosphate (IP3) is mediated by calcium-activated phosphatidylinositol-specific phospholipase C enzymes. This Homo sapiens (Human) protein is 1-phosphatidylinositol 4,5-bisphosphate phosphodiesterase eta-1.